The primary structure comprises 108 residues: ADM5 (108 aa).

Positions 1–18 are cleaved as a signal peptide; that stretch reads MTAHILLLWLFASSILGD. A propeptide spanning residues 19-25 is cleaved from the precursor; the sequence is PDSAGRL. C38 and C43 form a disulfide bridge. A disordered region spans residues 61–108; it reads KELSGKAGRKPQDPYSYGRRRRRRRRRREARLLRRLQDPSLRRAQLAG. At Y77 the chain carries Tyrosine amide. Residues 78 to 89 are compositionally biased toward basic residues; sequence GRRRRRRRRRRE. Residues 89–108 constitute a propeptide that is removed on maturation; that stretch reads EARLLRRLQDPSLRRAQLAG. Residues 90–101 show a composition bias toward basic and acidic residues; that stretch reads ARLLRRLQDPSL.

This sequence belongs to the adrenomedullin family. Expressed abundantly in the spleen and thymus. Also expressed in adrenal and pituitary. Not expressed in brain, heart, kidney, liver and stomach.

Its subcellular location is the secreted. Seems to have a peripheral vasodepressor effect and a central vasopressor effect. In Sus scrofa (Pig), this protein is ADM5 (ADM5).